Here is a 487-residue protein sequence, read N- to C-terminus: GTPase Der (487 aa).

EngA-type G domains follow at residues 3–167 (FTLA…EGFA) and 203–378 (LQIA…DIWN). Residues 9–16 (GRPNVGKS), 56–60 (DTAGL), 119–122 (NKAE), 209–216 (GRPNAGKS), 256–260 (DTAGM), and 321–324 (NKWD) each bind GTP. Residues 379 to 463 (RRITTARLNS…PIRLTMRGQG (85 aa)) enclose the KH-like domain. The segment at 459-487 (MRGQGDKNPFKERKFRTPSRLRKHLGKKG) is disordered. Residues 471-487 (RKFRTPSRLRKHLGKKG) show a composition bias toward basic residues.

This sequence belongs to the TRAFAC class TrmE-Era-EngA-EngB-Septin-like GTPase superfamily. EngA (Der) GTPase family. In terms of assembly, associates with the 50S ribosomal subunit.

In terms of biological role, GTPase that plays an essential role in the late steps of ribosome biogenesis. The polypeptide is GTPase Der (Cereibacter sphaeroides (strain ATCC 17025 / ATH 2.4.3) (Rhodobacter sphaeroides)).